A 164-amino-acid polypeptide reads, in one-letter code: Protein-export protein SecB (164 aa).

Belongs to the SecB family. As to quaternary structure, homotetramer, a dimer of dimers. One homotetramer interacts with 1 SecA dimer.

Its subcellular location is the cytoplasm. Functionally, one of the proteins required for the normal export of preproteins out of the cell cytoplasm. It is a molecular chaperone that binds to a subset of precursor proteins, maintaining them in a translocation-competent state. It also specifically binds to its receptor SecA. This chain is Protein-export protein SecB, found in Caulobacter sp. (strain K31).